Consider the following 163-residue polypeptide: Protein-export protein SecB (163 aa).

It belongs to the SecB family. As to quaternary structure, homotetramer, a dimer of dimers. One homotetramer interacts with 1 SecA dimer.

The protein localises to the cytoplasm. In terms of biological role, one of the proteins required for the normal export of preproteins out of the cell cytoplasm. It is a molecular chaperone that binds to a subset of precursor proteins, maintaining them in a translocation-competent state. It also specifically binds to its receptor SecA. The chain is Protein-export protein SecB from Shewanella woodyi (strain ATCC 51908 / MS32).